A 192-amino-acid chain; its full sequence is Elongation factor P (192 aa).

Lysine 37 bears the N6-(3,6-diaminohexanoyl)-5-hydroxylysine mark.

This sequence belongs to the elongation factor P family. May be beta-lysylated on the epsilon-amino group of Lys-37 by the combined action of EpmA and EpmB, and then hydroxylated on the C5 position of the same residue by EpmC (if this protein is present). Lysylation is critical for the stimulatory effect of EF-P on peptide-bond formation. The lysylation moiety may extend toward the peptidyltransferase center and stabilize the terminal 3-CCA end of the tRNA. Hydroxylation of the C5 position on Lys-37 may allow additional potential stabilizing hydrogen-bond interactions with the P-tRNA.

The protein localises to the cytoplasm. The protein operates within protein biosynthesis; polypeptide chain elongation. Involved in peptide bond synthesis. Alleviates ribosome stalling that occurs when 3 or more consecutive Pro residues or the sequence PPG is present in a protein, possibly by augmenting the peptidyl transferase activity of the ribosome. Modification of Lys-37 is required for alleviation. The protein is Elongation factor P of Acinetobacter baylyi (strain ATCC 33305 / BD413 / ADP1).